A 358-amino-acid chain; its full sequence is DNA polymerase IV (358 aa).

Residues 4–185 form the UmuC domain; the sequence is IIHIDMDCYF…LSLRKIPGVG (182 aa). The Mg(2+) site is built by D8 and D103. Residue E104 is part of the active site.

It belongs to the DNA polymerase type-Y family. Monomer. Requires Mg(2+) as cofactor.

The protein resides in the cytoplasm. It carries out the reaction DNA(n) + a 2'-deoxyribonucleoside 5'-triphosphate = DNA(n+1) + diphosphate. Functionally, poorly processive, error-prone DNA polymerase involved in untargeted mutagenesis. Copies undamaged DNA at stalled replication forks, which arise in vivo from mismatched or misaligned primer ends. These misaligned primers can be extended by PolIV. Exhibits no 3'-5' exonuclease (proofreading) activity. May be involved in translesional synthesis, in conjunction with the beta clamp from PolIII. The polypeptide is DNA polymerase IV (Shewanella baltica (strain OS185)).